Here is a 158-residue protein sequence, read N- to C-terminus: Small ribosomal subunit protein uS10m (158 aa).

It belongs to the universal ribosomal protein uS10 family.

Its subcellular location is the mitochondrion. The protein is Small ribosomal subunit protein uS10m (mrps-10) of Caenorhabditis briggsae.